The primary structure comprises 217 residues: Somatotropin (217 aa).

Positions 1-27 are cleaved as a signal peptide; that stretch reads MMAAGPRTSLLLAFTLLCLPWTQVVGA. His-46 contacts Zn(2+). Residues Cys-79 and Cys-190 are joined by a disulfide bond. The residue at position 132 (Ser-132) is a Phosphoserine. Glu-199 contributes to the Zn(2+) binding site. Cys-207 and Cys-215 are disulfide-bonded.

It belongs to the somatotropin/prolactin family.

It localises to the secreted. Plays an important role in growth control. Its major role in stimulating body growth is to stimulate the liver and other tissues to secrete IGF1. It stimulates both the differentiation and proliferation of myoblasts. It also stimulates amino acid uptake and protein synthesis in muscle and other tissues. The polypeptide is Somatotropin (GH1) (Capra hircus (Goat)).